A 544-amino-acid chain; its full sequence is Putative cysteine ligase BshC (544 aa).

The stretch at 431 to 463 (LNDTCRTIKEEHEKFIQELSRLDEKIYDFEEKN) forms a coiled coil.

This sequence belongs to the BshC family.

Its function is as follows. Involved in bacillithiol (BSH) biosynthesis. May catalyze the last step of the pathway, the addition of cysteine to glucosamine malate (GlcN-Mal) to generate BSH. The sequence is that of Putative cysteine ligase BshC from Natranaerobius thermophilus (strain ATCC BAA-1301 / DSM 18059 / JW/NM-WN-LF).